The primary structure comprises 72 residues: Large ribosomal subunit protein bL31 (72 aa).

This sequence belongs to the bacterial ribosomal protein bL31 family. Type A subfamily. In terms of assembly, part of the 50S ribosomal subunit.

Functionally, binds the 23S rRNA. The chain is Large ribosomal subunit protein bL31 from Rhodospirillum rubrum (strain ATCC 11170 / ATH 1.1.1 / DSM 467 / LMG 4362 / NCIMB 8255 / S1).